The following is a 286-amino-acid chain: NAD kinase (286 aa).

Catalysis depends on Asp-74, which acts as the Proton acceptor. NAD(+) contacts are provided by residues 74-75, 148-149, Asp-178, Ala-186, 189-194, and Gln-244; these read DG, ND, and TAYNLS.

Belongs to the NAD kinase family. The cofactor is a divalent metal cation.

It localises to the cytoplasm. It carries out the reaction NAD(+) + ATP = ADP + NADP(+) + H(+). Its function is as follows. Involved in the regulation of the intracellular balance of NAD and NADP, and is a key enzyme in the biosynthesis of NADP. Catalyzes specifically the phosphorylation on 2'-hydroxyl of the adenosine moiety of NAD to yield NADP. The sequence is that of NAD kinase from Campylobacter jejuni subsp. jejuni serotype O:6 (strain 81116 / NCTC 11828).